A 32-amino-acid polypeptide reads, in one-letter code: Glutathione S-transferase 8.2 (32 aa).

21–22 (QS) contributes to the glutathione binding site.

It belongs to the GST superfamily. Alpha family. As to quaternary structure, homodimer. Post-translationally, the N-terminus is blocked.

The protein resides in the cytoplasm. The enzyme catalyses RX + glutathione = an S-substituted glutathione + a halide anion + H(+). Its function is as follows. Conjugation of reduced glutathione to a wide number of exogenous and endogenous hydrophobic electrophiles. This chain is Glutathione S-transferase 8.2, found in Dicentrarchus labrax (European seabass).